A 144-amino-acid polypeptide reads, in one-letter code: uncharacterized protein (144 aa).

Positions 24–67 (KLKELYQRLNQGINVEEVLKETVEDYKEKMEKYILEVLEEIEKY) form a coiled coil.

This is an uncharacterized protein from Aquifex aeolicus (strain VF5).